A 212-amino-acid chain; its full sequence is Photosynthetic NDH subunit of subcomplex B 5, chloroplastic (212 aa).

A chloroplast-targeting transit peptide spans 1-48; it reads MATVTILSPKSIPKVTDSKFGARVSDQIVNVVKCGKSGRRLKLAKLVS. 2 helical membrane-spanning segments follow: residues 115 to 135 and 136 to 156; these read FQGL…YFDA and PGEY…IIEM.

Part of the chloroplast NDH complex, composed of a mixture of chloroplast and nucleus encoded subunits. Component of the NDH subcomplex B, at least composed of PnsB1, PnsB2, PnsB3, PnsB4 and PnsB5.

It is found in the plastid. Its subcellular location is the chloroplast membrane. NDH shuttles electrons from NAD(P)H:plastoquinone, via FMN and iron-sulfur (Fe-S) centers, to quinones in the photosynthetic chain and possibly in a chloroplast respiratory chain. The immediate electron acceptor for the enzyme in this species is believed to be plastoquinone. Couples the redox reaction to proton translocation, and thus conserves the redox energy in a proton gradient. This is Photosynthetic NDH subunit of subcomplex B 5, chloroplastic from Arabidopsis thaliana (Mouse-ear cress).